Here is a 61-residue protein sequence, read N- to C-terminus: Small ribosomal subunit protein uS14 (61 aa).

Zn(2+) is bound by residues C24, C27, C40, and C43.

This sequence belongs to the universal ribosomal protein uS14 family. Zinc-binding uS14 subfamily. As to quaternary structure, part of the 30S ribosomal subunit. Contacts proteins S3 and S10. Requires Zn(2+) as cofactor.

In terms of biological role, binds 16S rRNA, required for the assembly of 30S particles and may also be responsible for determining the conformation of the 16S rRNA at the A site. This chain is Small ribosomal subunit protein uS14, found in Deinococcus deserti (strain DSM 17065 / CIP 109153 / LMG 22923 / VCD115).